We begin with the raw amino-acid sequence, 456 residues long: NADPH-ferredoxin reductase FprA (456 aa).

Positions 14, 40, 48, and 84 each coordinate FAD. Residues Arg-110, 155–158 (NGNV), 199–200 (RR), and Glu-211 contribute to the NADP(+) site. Residues Trp-359 and 366–368 (GVI) each bind FAD. Gly-366 contacts NADP(+).

It belongs to the ferredoxin--NADP reductase type 1 family. Monomer. FAD serves as cofactor.

The enzyme catalyses 2 reduced [2Fe-2S]-[ferredoxin] + NADP(+) + H(+) = 2 oxidized [2Fe-2S]-[ferredoxin] + NADPH. In terms of biological role, may serve as electron transfer protein and supply electrons to P450 systems. The polypeptide is NADPH-ferredoxin reductase FprA (fprA) (Mycobacterium tuberculosis (strain CDC 1551 / Oshkosh)).